A 171-amino-acid chain; its full sequence is Lipoprotein signal peptidase (171 aa).

Transmembrane regions (helical) follow at residues 67–87 (YALLGLTLAATIFMILWLWRS) and 88–108 (TSKLIACALGLIIGGALGNAY). Active-site residues include D118 and D136. Residues 127 to 147 (FSWYVFNLADAAIVAGVALLL) traverse the membrane as a helical segment.

The protein belongs to the peptidase A8 family.

It localises to the cell inner membrane. It catalyses the reaction Release of signal peptides from bacterial membrane prolipoproteins. Hydrolyzes -Xaa-Yaa-Zaa-|-(S,diacylglyceryl)Cys-, in which Xaa is hydrophobic (preferably Leu), and Yaa (Ala or Ser) and Zaa (Gly or Ala) have small, neutral side chains.. It functions in the pathway protein modification; lipoprotein biosynthesis (signal peptide cleavage). Functionally, this protein specifically catalyzes the removal of signal peptides from prolipoproteins. The chain is Lipoprotein signal peptidase from Methylocella silvestris (strain DSM 15510 / CIP 108128 / LMG 27833 / NCIMB 13906 / BL2).